A 1850-amino-acid polypeptide reads, in one-letter code: Vitellogenin-2 (1850 aa).

Residues 1–15 (MRGIILALVLTLVGS) form the signal peptide. The region spanning 24–662 (FNSRRSYLYN…SPRTMFPSAI (639 aa)) is the Vitellogenin domain. An N-linked (GlcNAc...) asparagine glycan is attached at Asn-604. The segment at 935-984 (DAPLDVTEEPFQTSERASREHFAMQGPDSMPRKQSHSSREDLRRSTGKRA) is disordered. Asn-1094 is a glycosylation site (N-linked (GlcNAc...) asparagine). Disordered regions lie at residues 1115-1313 (GTEP…SSSS) and 1338-1362 (EFPKRKLPGDRATSRYSSTRSSHDT). The segment covering 1122–1143 (TSSSSSSASSTATSSSSSSASS) has biased composition (low complexity). Basic and acidic residues predominate over residues 1156–1165 (DQVKQARNKD). Residues 1167–1266 (SSSSRSSKSS…SRSSSSSSKS (100 aa)) show a composition bias toward low complexity. N-linked (GlcNAc...) asparagine glycosylation is found at Asn-1177 and Asn-1188. Positions 1267–1277 (SSHHSHSHHSG) are enriched in basic residues. Low complexity predominate over residues 1278–1291 (HLNGSSSSSSSSRS). Residue Asn-1280 is glycosylated (N-linked (GlcNAc...) asparagine). Residues 1338-1350 (EFPKRKLPGDRAT) are compositionally biased toward basic and acidic residues. Residues Asn-1417, Asn-1597, and Asn-1665 are each glycosylated (N-linked (GlcNAc...) asparagine). The region spanning 1579 to 1756 (ARCSVSYNKI…SWILEEAPCR (178 aa)) is the VWFD domain. 2 disulfides stabilise this stretch: Cys-1581–Cys-1719 and Cys-1604–Cys-1755.

In terms of processing, phosvitin, an egg yolk storage protein, is one of the most highly phosphorylated (10%) proteins in nature. Post-translationally, cathepsin D is responsible for intraoocytic processing of vitellogenin. May contain intrachain disulfide bonds. In terms of tissue distribution, after incorporation from serum via a specific receptor, it is cleaved into four fragments, heavy and light chain lipovitellins, phosphovitin and YGP40, and YGP40 is released into the yolk plasma before or during compartmentation of lipovitellin-phosvitin complex into the yolk granule.

Its function is as follows. Precursor of the major egg-yolk proteins that are sources of nutrients during early development of oviparous organisms. Phosvitin is believed to be of importance in sequestering calcium, iron and other cations for the developing embryo. This is Vitellogenin-2 (VTG2) from Gallus gallus (Chicken).